Consider the following 72-residue polypeptide: Metallothionein-like protein 1B (72 aa).

Belongs to the metallothionein superfamily. Type 15 family. In terms of tissue distribution, expressed in leaves of mature plants.

In terms of biological role, metallothioneins have a high content of cysteine residues that bind various heavy metals. Functions as a metal chelator of nickel (Ni), cadmium (Cd), zinc (Zn) and copper (Cu). Possesses higher affinity for Ni and Cd ions compared to Zn and Cu ions. The protein is Metallothionein-like protein 1B (MT1B) of Oryza sativa subsp. japonica (Rice).